The chain runs to 159 residues: Eukaryotic translation initiation factor 5A-2 (159 aa).

A compositionally biased stretch (basic and acidic residues) spans 1-12 (MSDEEHQFESKA). The disordered stretch occupies residues 1–23 (MSDEEHQFESKADAGASKTYPQQ). A Hypusine modification is found at lysine 52.

This sequence belongs to the eIF-5A family. Post-translationally, lys-52 undergoes hypusination, a unique post-translational modification that consists in the addition of a butylamino group from spermidine to lysine side chain, leading to the formation of the unusual amino acid hypusine. eIF-5As are the only known proteins to undergo this modification, which is essential for their function.

In terms of biological role, translation factor that promotes translation elongation and termination, particularly upon ribosome stalling at specific amino acid sequence contexts. Binds between the exit (E) and peptidyl (P) site of the ribosome and promotes rescue of stalled ribosome: specifically required for efficient translation of polyproline-containing peptides as well as other motifs that stall the ribosome. Acts as a ribosome quality control (RQC) cofactor by joining the RQC complex to facilitate peptidyl transfer during CAT tailing step. The polypeptide is Eukaryotic translation initiation factor 5A-2 (EIF-5A2) (Nicotiana plumbaginifolia (Leadwort-leaved tobacco)).